The chain runs to 154 residues: Aspartate carbamoyltransferase regulatory chain (154 aa).

Zn(2+)-binding residues include Cys109, Cys114, Cys138, and Cys141.

It belongs to the PyrI family. Contains catalytic and regulatory chains. Zn(2+) serves as cofactor.

In terms of biological role, involved in allosteric regulation of aspartate carbamoyltransferase. This Yersinia pestis protein is Aspartate carbamoyltransferase regulatory chain.